Reading from the N-terminus, the 454-residue chain is MLHPQKLEQQNYETFNKAYLKSKQLVTEGVSIDEISSNNDEQRKRIAMEKYRMGIEYFEKALKISPDKVYPEKRSEVITHREAMKRNLEATKGRLSDLEKMFPSKGNRNLQHRPVQFVSPSISKPQTAQLSSRPISSEKKNINYSNARTRSNLLKGVDDKFGGPLLNEILNQDDVKMSDIIGAETAKRALEETVILPTVNPSLFSGLRQPAQGILLFGPPGNGKTLLARAVAGECGSTMFLNVSAASLTSKWVGDAEKIVRALFQIARNGQPTIIFIDEIDSILCERNEKETEVSRRMKTEFLIQMDGMLSSKDDRLLVIGATNRPEELDSAILRRFPKRILIDVPNAAARLKLIMSLLEKTKTSFDLGLTQRQILAEWTHGYSNSDLVALCREAAMVPIRDLSRKDIKNLVSTELRPITLRDFEIAMKAIKPSTNERMLQKLRKYAATAGQSD.

Residue 218–225 coordinates ATP; the sequence is GPPGNGKT.

It belongs to the AAA ATPase family. Spastin subfamily. As to quaternary structure, homohexamer. The homohexamer is stabilized by ATP-binding. The homohexamer may adopt a ring conformation through which microtubules pass prior to being severed. Interacts with microtubules.

The protein localises to the cytoplasm. It is found in the cytoskeleton. The protein resides in the perinuclear region. It catalyses the reaction n ATP + n H2O + a microtubule = n ADP + n phosphate + (n+1) alpha/beta tubulin heterodimers.. Severs microtubules, probably in an ATP-dependent fashion. This is Probable spastin homolog Bm1_53365 from Brugia malayi (Filarial nematode worm).